Reading from the N-terminus, the 405-residue chain is Calsequestrin-1 (405 aa).

The first 34 residues, Met1–Gly34, serve as a signal peptide directing secretion. Tyr43 is modified (phosphotyrosine). At Ser81 the chain carries Phosphoserine. Thr124 bears the Phosphothreonine mark. Ser216 carries the phosphoserine modification. Asn350 carries N-linked (GlcNAc...) asparagine glycosylation. Residues Glu382–Asp405 form a disordered region.

This sequence belongs to the calsequestrin family. As to quaternary structure, monomer; increases in response to a depletion of intracellular calcium. Homodimer. Homotetramer and homopolymer. Can form linear homooligomers. Ca(2+) ions promote oligomerization. Interacts (via C-terminal end and preferentially with the monomeric form) with STIM1; this interaction increases in response to a depletion of intracellular calcium, decreases both STIM1 aggregation and clustering, interaction of STIM1 with ORAI1 and store-operated Ca(2+) entry (SOCE) activity. Interacts with ASPH and TRDN. In terms of processing, N-glycosylated. As to expression, detected in skeletal muscle (at protein level). Detected in skeletal muscle.

Its subcellular location is the endoplasmic reticulum. It localises to the sarcoplasmic reticulum. The protein localises to the sarcoplasmic reticulum lumen. It is found in the sarcoplasmic reticulum membrane. The protein resides in the mitochondrion matrix. Functionally, calsequestrin is a high-capacity, moderate affinity, calcium-binding protein and thus acts as an internal calcium store in muscle. Calcium ions are bound by clusters of acidic residues at the protein surface, often at the interface between subunits. Can bind around 80 Ca(2+) ions. Regulates the release of lumenal Ca(2+) via the calcium release channel RYR1; this plays an important role in triggering muscle contraction. Negatively regulates store-operated Ca(2+) entry (SOCE) activity. The chain is Calsequestrin-1 (Casq1) from Mus musculus (Mouse).